Here is a 108-residue protein sequence, read N- to C-terminus: Cytochrome c-555 (108 aa).

An N-terminal signal peptide occupies residues Met-1–Ala-22. Cys-36, Cys-39, His-40, and Met-82 together coordinate heme c.

Post-translationally, binds 1 heme c group covalently per subunit.

This basic c-type monoheme cytochrome has been found exclusively in the green photosynthetic bacteria, although its role in bacterial photosynthesis is not established. It has an unusually low redox potential compared with mitochondrial cytochrome c. It is reactive with cytochrome c oxidases but not with reductases. This is Cytochrome c-555 from Chlorobaculum tepidum (strain ATCC 49652 / DSM 12025 / NBRC 103806 / TLS) (Chlorobium tepidum).